The primary structure comprises 471 residues: UDP-glycosyltransferase CGT (471 aa).

The active-site Proton acceptor is His24. His24 serves as a coordination point for an anthocyanidin. Catalysis depends on Asp120, which acts as the Charge relay. Thr143 provides a ligand contact to UDP-alpha-D-glucose. Residues 280-281 (SR) form a UDP region. Val343, Gln345, His360, Trp363, Asn364, Ser365, and Glu368 together coordinate UDP-alpha-D-glucose. An an anthocyanidin-binding site is contributed by Gly383. Residues Asp384 and Gln385 each coordinate UDP-alpha-D-glucose.

Belongs to the UDP-glycosyltransferase family.

It carries out the reaction a 3'-hydro-2'-hydroxy-beta-oxodihydrochalcone + UDP-alpha-D-glucose = a 3'-(beta-D-glucopyranosyl)-2'-hydroxy-beta-oxodihydrochalcone + UDP + H(+). In terms of biological role, UDP-glucose-dependent glucosyltransferase catalyzing the c-glucosylation of 2-hydroxyflavanones. Acts preferentially on the dibenzoylmethane tautomers formed in equilibrium with 2-hydroxyflavanones. No activity with naringenin or naringenin chalcone. This Oryza sativa subsp. indica (Rice) protein is UDP-glycosyltransferase CGT.